The chain runs to 239 residues: Ribonuclease PH (239 aa).

Phosphate contacts are provided by residues R87 and 125 to 127 (GTR).

The protein belongs to the RNase PH family. In terms of assembly, homohexameric ring arranged as a trimer of dimers.

It carries out the reaction tRNA(n+1) + phosphate = tRNA(n) + a ribonucleoside 5'-diphosphate. Functionally, phosphorolytic 3'-5' exoribonuclease that plays an important role in tRNA 3'-end maturation. Removes nucleotide residues following the 3'-CCA terminus of tRNAs; can also add nucleotides to the ends of RNA molecules by using nucleoside diphosphates as substrates, but this may not be physiologically important. Probably plays a role in initiation of 16S rRNA degradation (leading to ribosome degradation) during starvation. The protein is Ribonuclease PH of Saccharophagus degradans (strain 2-40 / ATCC 43961 / DSM 17024).